Reading from the N-terminus, the 806-residue chain is Ent-atiserene synthase KSL4, chloroplastic (806 aa).

Residues 1–75 (MGIVALILIK…AKLFKKNEVC (75 aa)) constitute a chloroplast transit peptide. The tract at residues 33-56 (ASLAGSGLPKTTPPKTASLQSHSP) is disordered. The span at 45 to 55 (PPKTASLQSHS) shows a compositional bias: polar residues. 4 residues coordinate Mg(2+): Asp556, Asp560, Asn700, and Glu708. Positions 556 to 560 (DDLFD) match the DDXXD motif motif.

The protein belongs to the terpene synthase family. Mg(2+) is required as a cofactor. In terms of tissue distribution, highly expressed in leaves, and, at low levels, in roots, stems and flowers.

The protein resides in the plastid. Its subcellular location is the chloroplast. It catalyses the reaction ent-copalyl diphosphate = ent-atiserene + diphosphate. It functions in the pathway secondary metabolite biosynthesis; terpenoid biosynthesis. Involved in the biosynthesis of ent-kaurene diterpenoids natural products such as oridonin, miltiradiene, eriocalyxin B and nezukol, known to exhibit antitumor, anti-inflammatory and antibacterial activities. Catalyzes the conversion of ent-copalyl diphosphate (ent-CPP) to ent-atiserene. This is Ent-atiserene synthase KSL4, chloroplastic from Isodon rubescens (Rabdosia rubescens).